The primary structure comprises 443 residues: Frizzled/smoothened-like sans CRD protein E (443 aa).

The signal sequence occupies residues 1–23 (MISHIKKFINLYTIVFLLYILYS). The Extracellular segment spans residues 24–83 (NENFFVKGQKLPPGFCPSPLIYRNTTDRQSDIDIGFQFLGETNCVQPCPSLILTENEWNK). A glycan (N-linked (GlcNAc...) asparagine) is linked at Asn-47. A helical membrane pass occupies residues 84 to 104 (VFNMSLVAGTISMFALIFLII). The Cytoplasmic portion of the chain corresponds to 105–120 (TYSPLVNNIKDYTRHT). A helical transmembrane segment spans residues 121–141 (VGILFLFSGILIAMTTDGRQL). Topologically, residues 142–166 (WDIDLGFKKYCPEPGRFARQSDSKC) are extracellular. Residues 167–187 (LVTAIFFQFGCVTALLWWAAI) form a helical membrane-spanning segment. The Cytoplasmic portion of the chain corresponds to 188–203 (SVDLWITIKKIKISKK). The helical transmembrane segment at 204–224 (LFIIYTIAVNIVTIVLTFGPV) threads the bilayer. The Extracellular segment spans residues 225–248 (GSKQYGYIDAAIGCWLMDLKYQVG). Residues 249-269 (YFWAPVGFCLCVGCVSIVLIL) form a helical membrane-spanning segment. The Cytoplasmic portion of the chain corresponds to 270–289 (KEIYNVSDAVKKKLLAKHLK). Residues 290 to 310 (PLMLIILMLTEFIYMFIFYSY) traverse the membrane as a helical segment. Topologically, residues 311 to 350 (TTSKKNHYHDIIEEYVVCLFVHAANPSVCKIGSTISPSAH) are extracellular. A helical transmembrane segment spans residues 351–371 (FFFHLCIRLMGLEVLIFYGFT). Topologically, residues 372–443 (RQTRKIWMRS…SGIDDSKHDP (72 aa)) are cytoplasmic. Low complexity-rich tracts occupy residues 397–410 (SSSN…NKTS) and 419–432 (ESSE…QSIE). A disordered region spans residues 397-443 (SSSNDSKSSNNKTSGRVTGGFGESSEQSNEPEQSIELSGIDDSKHDP).

It belongs to the G-protein coupled receptor Fz/Smo family.

It is found in the membrane. The polypeptide is Frizzled/smoothened-like sans CRD protein E (fscE) (Dictyostelium discoideum (Social amoeba)).